The sequence spans 325 residues: Phospho-N-acetylmuramoyl-pentapeptide-transferase (325 aa).

10 helical membrane-spanning segments follow: residues valine 5 to isoleucine 25, leucine 57 to phenylalanine 77, valine 81 to isoleucine 101, leucine 117 to serine 137, serine 146 to alanine 166, glycine 178 to threonine 198, tyrosine 200 to phenylalanine 220, valine 227 to methionine 247, isoleucine 252 to valine 272, and valine 304 to isoleucine 324.

This sequence belongs to the glycosyltransferase 4 family. MraY subfamily. Requires Mg(2+) as cofactor.

It is found in the cell membrane. It catalyses the reaction UDP-N-acetyl-alpha-D-muramoyl-L-alanyl-gamma-D-glutamyl-meso-2,6-diaminopimeloyl-D-alanyl-D-alanine + di-trans,octa-cis-undecaprenyl phosphate = di-trans,octa-cis-undecaprenyl diphospho-N-acetyl-alpha-D-muramoyl-L-alanyl-D-glutamyl-meso-2,6-diaminopimeloyl-D-alanyl-D-alanine + UMP. Its pathway is cell wall biogenesis; peptidoglycan biosynthesis. Catalyzes the initial step of the lipid cycle reactions in the biosynthesis of the cell wall peptidoglycan: transfers peptidoglycan precursor phospho-MurNAc-pentapeptide from UDP-MurNAc-pentapeptide onto the lipid carrier undecaprenyl phosphate, yielding undecaprenyl-pyrophosphoryl-MurNAc-pentapeptide, known as lipid I. The chain is Phospho-N-acetylmuramoyl-pentapeptide-transferase from Halalkalibacterium halodurans (strain ATCC BAA-125 / DSM 18197 / FERM 7344 / JCM 9153 / C-125) (Bacillus halodurans).